Reading from the N-terminus, the 359-residue chain is Phospho-N-acetylmuramoyl-pentapeptide-transferase (359 aa).

Helical transmembrane passes span 26–46 (TIYAAITALIICFLLGPWLIR), 75–95 (GGVLIIFAVVVSTLLWANLTI), 97–117 (YVWLVLMVTLGYGLIGFADDY), 134–154 (LACEVCIALLVSVVLYAKPGF), 166–186 (VLPDLGWGYIFLSTFIIVGAA), 197–217 (GLAIGPAITCFMTYLLFAYFA), 233–253 (GVGELSIFCGAIVGAGIGFLW), 261–281 (VFMGDTGSLSLGGALGCLAIV), 286–306 (ILLAIVGGIFVLETFSVIFQV), and 336–356 (KVIVRFWIISILLALLAISTL).

Belongs to the glycosyltransferase 4 family. MraY subfamily. The cofactor is Mg(2+).

Its subcellular location is the cell inner membrane. It carries out the reaction UDP-N-acetyl-alpha-D-muramoyl-L-alanyl-gamma-D-glutamyl-meso-2,6-diaminopimeloyl-D-alanyl-D-alanine + di-trans,octa-cis-undecaprenyl phosphate = di-trans,octa-cis-undecaprenyl diphospho-N-acetyl-alpha-D-muramoyl-L-alanyl-D-glutamyl-meso-2,6-diaminopimeloyl-D-alanyl-D-alanine + UMP. It participates in cell wall biogenesis; peptidoglycan biosynthesis. Its function is as follows. Catalyzes the initial step of the lipid cycle reactions in the biosynthesis of the cell wall peptidoglycan: transfers peptidoglycan precursor phospho-MurNAc-pentapeptide from UDP-MurNAc-pentapeptide onto the lipid carrier undecaprenyl phosphate, yielding undecaprenyl-pyrophosphoryl-MurNAc-pentapeptide, known as lipid I. The chain is Phospho-N-acetylmuramoyl-pentapeptide-transferase from Syntrophus aciditrophicus (strain SB).